The primary structure comprises 357 residues: GPI mannosyltransferase 2 (357 aa).

8 consecutive transmembrane segments (helical) span residues 6-26 (TLIV…LVVP), 86-106 (AIAY…ALML), 128-148 (ILSP…FALL), 167-187 (VLGA…PFLF), 201-221 (GVSV…TQYL), 257-277 (YWTA…YLMY), 286-306 (LVPF…MWHV), and 334-354 (YVVR…GAYL).

This sequence belongs to the PIGV family.

The protein localises to the endoplasmic reticulum membrane. It participates in glycolipid biosynthesis; glycosylphosphatidylinositol-anchor biosynthesis. Mannosyltransferase involved in glycosylphosphatidylinositol-anchor biosynthesis. Transfers the second mannose to the glycosylphosphatidylinositol during GPI precursor assembly. The sequence is that of GPI mannosyltransferase 2 (GPI18) from Yarrowia lipolytica (strain CLIB 122 / E 150) (Yeast).